Reading from the N-terminus, the 119-residue chain is Putative F-box protein At2g39415 (119 aa).

The 56-residue stretch at 37 to 92 folds into the F-box domain; that stretch reads IDSISSLPDVILQQILSSLPTNLAIRTSVLSTRWRHVWSDTPYIYFDGPGTLYRGL.

In Arabidopsis thaliana (Mouse-ear cress), this protein is Putative F-box protein At2g39415.